The sequence spans 1958 residues: Echinoderm microtubule-associated protein-like 6 (1958 aa).

WD repeat units lie at residues 59-100 (GHND…TVSL), 104-145 (VHTH…LLAS), 148-187 (GHSD…LTAK), 195-233 (GDLQ…RTIQ), 235-273 (AHSA…TKID), 280-321 (GYKG…LILQ), 323-362 (HCEG…LIAR), 364-403 (NMEE…EVVH), 406-445 (DRKE…KKIG), and 561-601 (GHSA…VSNG). Residues 603 to 626 (LETAPQEGGADSYSEESDSDLSDV) are disordered. Residues 615 to 626 (YSEESDSDLSDV) show a composition bias toward acidic residues. 10 WD repeats span residues 725–766 (GHDD…CLSL), 770–811 (QHQR…KIAT), 814–853 (GHKD…FTSK), 861–900 (GKLE…KTVK), 901–940 (AHDG…KTYA), 996–1035 (HMEG…RMLA), 1038–1077 (KLKK…DMVS), 1080–1120 (HRKE…RVGI), 1191–1230 (SDIT…QHAR), and 1236–1276 (GHSA…TQES). Over residues 1322 to 1337 (KPHQQLKEVSVEERPP) the composition is skewed to basic and acidic residues. The interval 1322–1353 (KPHQQLKEVSVEERPPVSRAAPQPEKLQKNNI) is disordered. 10 WD repeats span residues 1412-1456 (EHTD…TLSM), 1460-1501 (FHSK…KVAS), 1504-1543 (GHLE…LLYK), 1553-1591 (AKMQ…RLVA), 1593-1638 (AHTG…CRAF), 1685-1724 (HMEG…LLNK), 1726-1767 (SLGH…GKKR), 1768-1807 (DRKS…NLNR), 1880-1919 (ADKA…KFAK), and 1925-1958 (GHSA…WRCL).

The protein belongs to the WD repeat EMAP family.

Its subcellular location is the cytoplasm. The protein localises to the cytoskeleton. In terms of biological role, may modify the assembly dynamics of microtubules, such that microtubules are slightly longer, but more dynamic. In Homo sapiens (Human), this protein is Echinoderm microtubule-associated protein-like 6 (EML6).